A 695-amino-acid chain; its full sequence is DUF724 domain-containing protein 3 (695 aa).

Positions 376–464 (ITVTPLKQQD…GTSDTIRVDD (89 aa)) are disordered. The segment covering 384-402 (QDAETEGKKSPKKTPEPVK) has biased composition (basic and acidic residues). Over residues 434–459 (NQNSNLNETDETCNVSKAGVNGTSDT) the composition is skewed to polar residues. Positions 509-694 (PFTKNLPFWK…LEFITSVLAP (186 aa)) constitute a DUF724 domain. Residues 614–684 (VEERKCLEKR…TIDQEIANVE (71 aa)) are a coiled coil.

Homodimer.

May be involved in the polar growth of plant cells via transportation of RNAs. The polypeptide is DUF724 domain-containing protein 3 (Arabidopsis thaliana (Mouse-ear cress)).